A 247-amino-acid chain; its full sequence is Pulmonary surfactant-associated protein A (247 aa).

A signal peptide spans 1–19 (MWCSLALILILVTVSGIMC). A glycan (N-linked (GlcNAc...) asparagine) is linked at asparagine 20. The region spanning 27–99 (GSPGIPGTPG…PGERGPPGLP (73 aa)) is the Collagen-like domain. 4-hydroxyproline is present on residues proline 29, proline 32, proline 35, proline 41, proline 53, proline 56, proline 62, proline 66, and proline 69. A disordered region spans residues 32-101 (PGTPGSHGLP…ERGPPGLPAS (70 aa)). A compositionally biased stretch (basic and acidic residues) spans 41 to 50 (PGRDGRDGVK). Residues 53 to 64 (PGPPGPMGPPGV) show a composition bias toward pro residues. A compositionally biased stretch (basic and acidic residues) spans 83–92 (ERGDKGDPGE). The 117-residue stretch at 131 to 247 (LAVGDKVFAT…LQSRLTICEF (117 aa)) folds into the C-type lectin domain. Intrachain disulfides connect cysteine 154/cysteine 245 and cysteine 223/cysteine 237. N-linked (GlcNAc...) asparagine glycosylation is present at asparagine 206. Glutamate 214, arginine 216, asparagine 233, and aspartate 234 together coordinate Ca(2+).

It belongs to the SFTPA family. Oligomeric complex of 6 set of homotrimers.

Its subcellular location is the secreted. The protein localises to the extracellular space. It is found in the extracellular matrix. It localises to the surface film. Functionally, in presence of calcium ions, it binds to surfactant phospholipids and contributes to lower the surface tension at the air-liquid interface in the alveoli of the mammalian lung and is essential for normal respiration. Enhances the expression of MYO18A/SP-R210 on alveolar macrophages. The chain is Pulmonary surfactant-associated protein A (SFTPA1) from Cavia porcellus (Guinea pig).